The chain runs to 395 residues: Elongation factor Tu (395 aa).

Residues 10–204 (KPHLNIGTIG…TVDNYIKEPI (195 aa)) form the tr-type G domain. The interval 19 to 26 (GHVDHGKT) is G1. Residue 19–26 (GHVDHGKT) participates in GTP binding. Thr-26 is a binding site for Mg(2+). The G2 stretch occupies residues 60 to 64 (GITIN). A G3 region spans residues 81-84 (DCPG). GTP contacts are provided by residues 81-85 (DCPGH) and 136-139 (NKVD). The segment at 136–139 (NKVD) is G4. The G5 stretch occupies residues 174–176 (SAL).

The protein belongs to the TRAFAC class translation factor GTPase superfamily. Classic translation factor GTPase family. EF-Tu/EF-1A subfamily. Monomer.

The protein localises to the cytoplasm. It catalyses the reaction GTP + H2O = GDP + phosphate + H(+). Functionally, GTP hydrolase that promotes the GTP-dependent binding of aminoacyl-tRNA to the A-site of ribosomes during protein biosynthesis. In Karelsulcia muelleri (strain GWSS) (Sulcia muelleri), this protein is Elongation factor Tu.